We begin with the raw amino-acid sequence, 414 residues long: Patatin-like protein 1 (414 aa).

The 205-residue stretch at 20–224 (LAIDGGGIRG…AANNPTMVAM (205 aa)) folds into the PNPLA domain. A GXGXXG motif is present at residues 24–29 (GGGIRG). The GXSXG signature appears at 62 to 66 (GTSTG). The Nucleophile role is filled by Ser64. Asp211 (proton acceptor) is an active-site residue. Positions 211–213 (DGG) match the DGA/G motif.

This sequence belongs to the patatin family.

Functionally, possesses non-specific lipolytic acyl hydrolase (LAH) activity. Hydrolyzes phospholipids as well as galactolipids. May play a role in disease resistance. This is Patatin-like protein 1 (PLP1) from Oryza sativa subsp. indica (Rice).